A 170-amino-acid polypeptide reads, in one-letter code: Ribosome maturation factor RimM (170 aa).

Positions 98–170 (PDEYYWVDLE…LIVVDWDPDF (73 aa)) constitute a PRC barrel domain.

The protein belongs to the RimM family. As to quaternary structure, binds ribosomal protein uS19.

The protein resides in the cytoplasm. In terms of biological role, an accessory protein needed during the final step in the assembly of 30S ribosomal subunit, possibly for assembly of the head region. Essential for efficient processing of 16S rRNA. May be needed both before and after RbfA during the maturation of 16S rRNA. It has affinity for free ribosomal 30S subunits but not for 70S ribosomes. The polypeptide is Ribosome maturation factor RimM (Xanthomonas campestris pv. campestris (strain 8004)).